The primary structure comprises 332 residues: DNA-directed RNA polymerase subunit alpha (332 aa).

The tract at residues 1-232 (MQVSNFLKPR…DQLTAFVELE (232 aa)) is alpha N-terminal domain (alpha-NTD). The alpha C-terminal domain (alpha-CTD) stretch occupies residues 246-332 (IDPVLLQPID…LREEETKVTA (87 aa)).

Belongs to the RNA polymerase alpha chain family. In terms of assembly, homodimer. The RNAP catalytic core consists of 2 alpha, 1 beta, 1 beta' and 1 omega subunit. When a sigma factor is associated with the core the holoenzyme is formed, which can initiate transcription.

It carries out the reaction RNA(n) + a ribonucleoside 5'-triphosphate = RNA(n+1) + diphosphate. DNA-dependent RNA polymerase catalyzes the transcription of DNA into RNA using the four ribonucleoside triphosphates as substrates. This chain is DNA-directed RNA polymerase subunit alpha, found in Nitrosococcus oceani (strain ATCC 19707 / BCRC 17464 / JCM 30415 / NCIMB 11848 / C-107).